A 217-amino-acid polypeptide reads, in one-letter code: Nucleolar protein 12 (217 aa).

Residues 34–98 (GFHKRKVERK…LVTAKTESVQ (65 aa)) adopt a coiled-coil conformation. Positions 122–217 (LGLPLPEQGD…MTGKARHNGE (96 aa)) are disordered. A compositionally biased stretch (acidic residues) spans 130-141 (GDQDGSQEEEMS). Basic residues-rich tracts occupy residues 172 to 184 (AHSR…KHPR) and 201 to 217 (KTQR…HNGE).

The protein belongs to the RRP17 family. As to quaternary structure, interacts with KIAA1191. In terms of tissue distribution, expressed in brain, lung, spleen, kidney and heart.

Its subcellular location is the nucleus. It localises to the nucleolus. It is found in the cytoplasm. In terms of biological role, multifunctional RNA binding protein that plays a role in RNA metabolism and DNA maintenance. Participates in the resolution of DNA stress and the maintenance of genome integrity by localizing to sites of DNA insults. Also plays a role in proper nucleolar organization by limiting nucleolar size and regulating nucleolar number. Mechanistically, regulates the nucleolar levels of fibrillarin and nucleolin, two key players in pre-rRNA processing and ribosome assembly. This Mus musculus (Mouse) protein is Nucleolar protein 12 (Nol12).